The sequence spans 67 residues: DNA-directed RNA polymerase subunit omega (67 aa).

It belongs to the RNA polymerase subunit omega family. The RNAP catalytic core consists of 2 alpha, 1 beta, 1 beta' and 1 omega subunit. When a sigma factor is associated with the core the holoenzyme is formed, which can initiate transcription.

The catalysed reaction is RNA(n) + a ribonucleoside 5'-triphosphate = RNA(n+1) + diphosphate. Its function is as follows. Promotes RNA polymerase assembly. Latches the N- and C-terminal regions of the beta' subunit thereby facilitating its interaction with the beta and alpha subunits. The polypeptide is DNA-directed RNA polymerase subunit omega (Burkholderia ambifaria (strain MC40-6)).